The following is a 419-amino-acid chain: tRNA(Ile)-lysidine synthase (419 aa).

Ser-31–Ser-36 is a binding site for ATP.

It belongs to the tRNA(Ile)-lysidine synthase family.

The protein localises to the cytoplasm. The enzyme catalyses cytidine(34) in tRNA(Ile2) + L-lysine + ATP = lysidine(34) in tRNA(Ile2) + AMP + diphosphate + H(+). In terms of biological role, ligates lysine onto the cytidine present at position 34 of the AUA codon-specific tRNA(Ile) that contains the anticodon CAU, in an ATP-dependent manner. Cytidine is converted to lysidine, thus changing the amino acid specificity of the tRNA from methionine to isoleucine. This is tRNA(Ile)-lysidine synthase from Ruegeria pomeroyi (strain ATCC 700808 / DSM 15171 / DSS-3) (Silicibacter pomeroyi).